Consider the following 293-residue polypeptide: Lipoyl synthase (293 aa).

Residues C38, C43, C49, C64, C68, C71, and S277 each coordinate [4Fe-4S] cluster. One can recognise a Radical SAM core domain in the interval 50–266; that stretch reads WSRGTATFLL…STIAKNAGIR (217 aa).

The protein belongs to the radical SAM superfamily. Lipoyl synthase family. [4Fe-4S] cluster serves as cofactor.

Its subcellular location is the cytoplasm. It carries out the reaction [[Fe-S] cluster scaffold protein carrying a second [4Fe-4S](2+) cluster] + N(6)-octanoyl-L-lysyl-[protein] + 2 oxidized [2Fe-2S]-[ferredoxin] + 2 S-adenosyl-L-methionine + 4 H(+) = [[Fe-S] cluster scaffold protein] + N(6)-[(R)-dihydrolipoyl]-L-lysyl-[protein] + 4 Fe(3+) + 2 hydrogen sulfide + 2 5'-deoxyadenosine + 2 L-methionine + 2 reduced [2Fe-2S]-[ferredoxin]. It functions in the pathway protein modification; protein lipoylation via endogenous pathway; protein N(6)-(lipoyl)lysine from octanoyl-[acyl-carrier-protein]: step 2/2. Catalyzes the radical-mediated insertion of two sulfur atoms into the C-6 and C-8 positions of the octanoyl moiety bound to the lipoyl domains of lipoate-dependent enzymes, thereby converting the octanoylated domains into lipoylated derivatives. The sequence is that of Lipoyl synthase from Chlorobium chlorochromatii (strain CaD3).